The sequence spans 138 residues: Putative pre-16S rRNA nuclease (138 aa).

This sequence belongs to the YqgF nuclease family.

Its subcellular location is the cytoplasm. Could be a nuclease involved in processing of the 5'-end of pre-16S rRNA. This chain is Putative pre-16S rRNA nuclease, found in Geobacillus thermodenitrificans (strain NG80-2).